The chain runs to 100 residues: uncharacterized protein (100 aa).

One can recognise an HTH arsR-type domain in the interval 8 to 100 (MKQSDDQIRA…TYLPGFLETL (93 aa)). Residues 44-67 (CGEVGEKCNIVKTTASYHFKTLRE) constitute a DNA-binding region (H-T-H motif).

This is an uncharacterized protein from Bacillus subtilis (strain 168).